The primary structure comprises 90 residues: Small ribosomal subunit protein bS16 (90 aa).

Belongs to the bacterial ribosomal protein bS16 family.

This is Small ribosomal subunit protein bS16 from Streptococcus agalactiae serotype III (strain NEM316).